The following is a 260-amino-acid chain: uncharacterized protein (260 aa).

This sequence belongs to the methyltransferase superfamily.

Its subcellular location is the cytoplasm. The protein resides in the nucleus. Probable methyltransferase. This is an uncharacterized protein from Schizosaccharomyces pombe (strain 972 / ATCC 24843) (Fission yeast).